The primary structure comprises 126 residues: MAILGLGTDIVEISRIEAVVERTGERLARRILSPSEWQHYQQHQQPVRFLAKRFAVKEAAAKAFGTGIRNGLAFNQFEVVNDALGKPTLRLHSRAAELAVELGVKSLHVTLADERRYACATVIIES.

Mg(2+)-binding residues include D9 and E58.

It belongs to the P-Pant transferase superfamily. AcpS family. It depends on Mg(2+) as a cofactor.

Its subcellular location is the cytoplasm. The catalysed reaction is apo-[ACP] + CoA = holo-[ACP] + adenosine 3',5'-bisphosphate + H(+). Its function is as follows. Transfers the 4'-phosphopantetheine moiety from coenzyme A to a Ser of acyl-carrier-protein. This is Holo-[acyl-carrier-protein] synthase from Yersinia pseudotuberculosis serotype I (strain IP32953).